The chain runs to 291 residues: ATP synthase gamma chain (291 aa).

Belongs to the ATPase gamma chain family. As to quaternary structure, F-type ATPases have 2 components, CF(1) - the catalytic core - and CF(0) - the membrane proton channel. CF(1) has five subunits: alpha(3), beta(3), gamma(1), delta(1), epsilon(1). CF(0) has three main subunits: a, b and c.

Its subcellular location is the cell inner membrane. Functionally, produces ATP from ADP in the presence of a proton gradient across the membrane. The gamma chain is believed to be important in regulating ATPase activity and the flow of protons through the CF(0) complex. This chain is ATP synthase gamma chain, found in Sulfurihydrogenibium sp. (strain YO3AOP1).